A 137-amino-acid polypeptide reads, in one-letter code: Histone H2B (137 aa).

The span at 1-10 (MPPKPADKKP) shows a compositional bias: basic and acidic residues. The interval 1–45 (MPPKPADKKPASKAPATASKAPEKKDAGKKTAASGDKKKRTKARK) is disordered. Lysine 8 and lysine 9 each carry N6-acetyllysine; alternate. Glycyl lysine isopeptide (Lys-Gly) (interchain with G-Cter in SUMO); alternate cross-links involve residues lysine 8 and lysine 9. Serine 12 is subject to Phosphoserine. The residue at position 13 (lysine 13) is an N6-acetyllysine. Position 24 is an N6-acetyllysine; alternate (lysine 24). A Glycyl lysine isopeptide (Lys-Gly) (interchain with G-Cter in SUMO); alternate cross-link involves residue lysine 24. Residue lysine 25 forms a Glycyl lysine isopeptide (Lys-Gly) (interchain with G-Cter in SUMO) linkage. Lysine 131 participates in a covalent cross-link: Glycyl lysine isopeptide (Lys-Gly) (interchain with G-Cter in ubiquitin).

It belongs to the histone H2B family. In terms of assembly, the nucleosome is a histone octamer containing two molecules each of H2A, H2B, H3 and H4 assembled in one H3-H4 heterotetramer and two H2A-H2B heterodimers. The octamer wraps approximately 147 bp of DNA. Monoubiquitinated by the ubc-2-bre-1 complex to form H2BK123ub1. H2BK123ub1 gives a specific tag for epigenetic transcriptional activation and is also prerequisite for H3K4me and H3K79me formation. H2BK123ub1 also modulates the formation of double-strand breaks during meiosis and is a prerequisite for DNA-damage checkpoint activation. Post-translationally, phosphorylated by ste-20 to form H2BS10ph during progression through meiotic prophase. May be correlated with chromosome condensation. In terms of processing, acetylated by gcn-5 to form H2BK11ac and H2BK16ac. H2BK16ac can also be formed by esa-1. Acetylation of N-terminal lysines and particularly formation of H2BK11acK16ac has a positive effect on transcription. Sumoylation to form H2BK6su or H2BK7su, and probably also H2BK16su or H2BK17su, occurs preferentially near the telomeres and represses gene transcription.

It is found in the nucleus. The protein resides in the chromosome. Functionally, core component of nucleosome. Nucleosomes wrap and compact DNA into chromatin, limiting DNA accessibility to the cellular machineries which require DNA as a template. Histones thereby play a central role in transcription regulation, DNA repair, DNA replication and chromosomal stability. DNA accessibility is regulated via a complex set of post-translational modifications of histones, also called histone code, and nucleosome remodeling. This chain is Histone H2B (hh2b), found in Neurospora crassa (strain ATCC 24698 / 74-OR23-1A / CBS 708.71 / DSM 1257 / FGSC 987).